The chain runs to 114 residues: Large ribosomal subunit protein bL20c (114 aa).

The protein belongs to the bacterial ribosomal protein bL20 family.

It is found in the plastid. The protein localises to the chloroplast. Its function is as follows. Binds directly to 23S ribosomal RNA and is necessary for the in vitro assembly process of the 50S ribosomal subunit. It is not involved in the protein synthesizing functions of that subunit. The polypeptide is Large ribosomal subunit protein bL20c (Psilotum nudum (Whisk fern)).